Consider the following 386-residue polypeptide: 5-hydroxytryptamine receptor 1B (386 aa).

Topologically, residues 1-42 (MEEQGIQCAPPPPAASQTGVPLTNLSHNCSADGYIYQDSIAL) are extracellular. N24 and N28 each carry an N-linked (GlcNAc...) asparagine glycan. A helical transmembrane segment spans residues 43–68 (PWKVLLVALLALITLATTLSNAFVIA). Residues 69-82 (TVYRTRKLHTPANY) lie on the Cytoplasmic side of the membrane. The helical transmembrane segment at 83 to 107 (LIASLAVTDLLVSILVMPISTMYTV) threads the bilayer. The Extracellular portion of the chain corresponds to 108 to 115 (TGRWTLGQ). The chain crosses the membrane as a helical span at residues 116–141 (VVCDFWLSSDITCCTASIMHLCVIAL). Residues C118 and C195 are joined by a disulfide bond. Positions 125 and 130 each coordinate ergotamine. The DRY motif; important for ligand-induced conformation changes and signaling signature appears at 142–144 (DRY). Over 142–161 (DRYWAITDAVEYSAKRTPKR) the chain is Cytoplasmic. The helical transmembrane segment at 162 to 180 (AAIMIVLVWVFSISISLPP) threads the bilayer. The Extracellular portion of the chain corresponds to 181-201 (FFWRQAKAEEEMLDCFVNTDH). V197 contacts ergotamine. Residues 202–225 (VLYTVYSTVGAFYLPTLLLIALYG) form a helical membrane-spanning segment. The Cytoplasmic portion of the chain corresponds to 226-311 (RIYVEARSRI…AARERKATKT (86 aa)). A compositionally biased stretch (polar residues) spans 255–268 (DSPGSTSSVTSINS). A disordered region spans residues 255–278 (DSPGSTSSVTSINSRAPDVPSESG). A helical membrane pass occupies residues 312 to 333 (LGIILGAFIVCWLPFFIISLVM). Over 334-343 (PICKDACWFH) the chain is Extracellular. The chain crosses the membrane as a helical span at residues 344 to 366 (MAIFDFFNWLGYLNSLINPIIYT). Positions 361–365 (NPIIY) match the NPxxY motif; important for ligand-induced conformation changes and signaling motif. Over 367–386 (MSNEDFKQAFHKLIRFKCAG) the chain is Cytoplasmic. The S-palmitoyl cysteine moiety is linked to residue C384.

Belongs to the G-protein coupled receptor 1 family. As to quaternary structure, homodimer. Heterodimer with HTR1D. In terms of processing, phosphorylated. Desensitization of the receptor may be mediated by its phosphorylation. Palmitoylated. In terms of tissue distribution, predominantly expressed in striatum and Purkinje cells.

The protein localises to the cell membrane. Its function is as follows. G-protein coupled receptor for 5-hydroxytryptamine (serotonin). Also functions as a receptor for ergot alkaloid derivatives, various anxiolytic and antidepressant drugs and other psychoactive substances, such as lysergic acid diethylamide (LSD). Ligand binding causes a conformation change that triggers signaling via guanine nucleotide-binding proteins (G proteins) and modulates the activity of downstream effectors, such as adenylate cyclase. HTR1B is coupled to G(i)/G(o) G alpha proteins and mediates inhibitory neurotransmission by inhibiting adenylate cyclase activity. Arrestin family members inhibit signaling via G proteins and mediate activation of alternative signaling pathways. Regulates the release of 5-hydroxytryptamine, dopamine and acetylcholine in the brain, and thereby affects neural activity, nociceptive processing, pain perception, mood and behavior. Besides, plays a role in vasoconstriction of cerebral arteries. The sequence is that of 5-hydroxytryptamine receptor 1B (Htr1b) from Mus musculus (Mouse).